The following is a 1200-amino-acid chain: DNA polymerase subunit gamma-1 (1200 aa).

Disordered regions lie at residues 471–515 and 667–688; these read QKKT…RPSM and MDLSSEVPATAKAKKRNNSSEH. The segment covering 472 to 481 has biased composition (basic residues); that stretch reads KKTKISKKQK. Positions 494 to 512 are enriched in basic and acidic residues; the sequence is LVEDHNEDPGPPTEKEESR.

Belongs to the DNA polymerase type-A family. In terms of assembly, heterotrimer composed of a catalytic subunit and a homodimer of accessory subunits. The cofactor is Mg(2+).

The protein localises to the mitochondrion. Its subcellular location is the mitochondrion matrix. It is found in the mitochondrion nucleoid. It carries out the reaction DNA(n) + a 2'-deoxyribonucleoside 5'-triphosphate = DNA(n+1) + diphosphate. Involved in the replication of mitochondrial DNA. Associates with mitochondrial DNA. This is DNA polymerase subunit gamma-1 (polg) from Xenopus laevis (African clawed frog).